The chain runs to 177 residues: Large ribosomal subunit protein uL6 (177 aa).

Belongs to the universal ribosomal protein uL6 family. In terms of assembly, part of the 50S ribosomal subunit.

This protein binds to the 23S rRNA, and is important in its secondary structure. It is located near the subunit interface in the base of the L7/L12 stalk, and near the tRNA binding site of the peptidyltransferase center. This is Large ribosomal subunit protein uL6 from Polynucleobacter asymbioticus (strain DSM 18221 / CIP 109841 / QLW-P1DMWA-1) (Polynucleobacter necessarius subsp. asymbioticus).